Reading from the N-terminus, the 154-residue chain is SsrA-binding protein (154 aa).

It belongs to the SmpB family.

Its subcellular location is the cytoplasm. Functionally, required for rescue of stalled ribosomes mediated by trans-translation. Binds to transfer-messenger RNA (tmRNA), required for stable association of tmRNA with ribosomes. tmRNA and SmpB together mimic tRNA shape, replacing the anticodon stem-loop with SmpB. tmRNA is encoded by the ssrA gene; the 2 termini fold to resemble tRNA(Ala) and it encodes a 'tag peptide', a short internal open reading frame. During trans-translation Ala-aminoacylated tmRNA acts like a tRNA, entering the A-site of stalled ribosomes, displacing the stalled mRNA. The ribosome then switches to translate the ORF on the tmRNA; the nascent peptide is terminated with the 'tag peptide' encoded by the tmRNA and targeted for degradation. The ribosome is freed to recommence translation, which seems to be the essential function of trans-translation. The polypeptide is SsrA-binding protein (Enterococcus hirae (strain ATCC 9790 / DSM 20160 / JCM 8729 / LMG 6399 / NBRC 3181 / NCIMB 6459 / NCDO 1258 / NCTC 12367 / WDCM 00089 / R)).